Here is a 705-residue protein sequence, read N- to C-terminus: Polyribonucleotide nucleotidyltransferase (705 aa).

2 residues coordinate Mg(2+): Asp485 and Asp491. The region spanning 552 to 611 (PKVFTMSINPSKIKDVIGAGGKTINKIIDETGVKIDIKEDGSVFVTAEDYESGKKALAMI) is the KH domain. In terms of domain architecture, S1 motif spans 621 to 689 (GEVYLGKVTK…SMGRVNLSRK (69 aa)).

It belongs to the polyribonucleotide nucleotidyltransferase family. Requires Mg(2+) as cofactor.

The protein localises to the cytoplasm. It catalyses the reaction RNA(n+1) + phosphate = RNA(n) + a ribonucleoside 5'-diphosphate. Functionally, involved in mRNA degradation. Catalyzes the phosphorolysis of single-stranded polyribonucleotides processively in the 3'- to 5'-direction. The chain is Polyribonucleotide nucleotidyltransferase from Clostridium novyi (strain NT).